We begin with the raw amino-acid sequence, 2694 residues long: Teneurin-3 (2694 aa).

3 disordered regions span residues 1 to 45 (MDVK…SSSE), 106 to 132 (PSSL…DNQS), and 161 to 198 (TQPA…PSVT). The Teneurin N-terminal domain occupies 1-306 (MDVKERRPYC…KSSKYCSWRC (306 aa)). The Cytoplasmic segment spans residues 1–312 (MDVKERRPYC…SWRCTALSAM (312 aa)). Polar residues predominate over residues 163 to 184 (PAPSHSCNEQPSNQHQQGQSTL). The chain crosses the membrane as a helical span at residues 313–333 (AVSILLSVLLCYCIAMHLFGL). Residues 334–2694 (NWQLQETEGY…FLRQSEIGKR (2361 aa)) are Extracellular-facing. Residues asparagine 374 and asparagine 413 are each glycosylated (N-linked (GlcNAc...) asparagine). 8 EGF-like domains span residues 508 to 539 (TLTE…PDCS), 540 to 570 (RAAC…TECD), 572 to 604 (PSNQ…DNCE), 605 to 636 (EVDC…NNCE), 638 to 671 (LKTM…PDCS), 672 to 703 (IEVC…VCDL), 704 to 733 (KACH…EHCT), and 734 to 768 (VEGC…AGCD). 22 disulfides stabilise this stretch: cysteine 512/cysteine 522, cysteine 516/cysteine 527, cysteine 529/cysteine 538, cysteine 547/cysteine 558, cysteine 560/cysteine 569, cysteine 576/cysteine 587, cysteine 581/cysteine 592, cysteine 594/cysteine 603, cysteine 608/cysteine 619, cysteine 613/cysteine 624, cysteine 626/cysteine 635, cysteine 646/cysteine 659, cysteine 661/cysteine 670, cysteine 675/cysteine 685, cysteine 679/cysteine 690, cysteine 692/cysteine 701, cysteine 706/cysteine 716, cysteine 710/cysteine 721, cysteine 723/cysteine 732, cysteine 737/cysteine 747, cysteine 741/cysteine 756, and cysteine 758/cysteine 767. The N-linked (GlcNAc...) asparagine glycan is linked to asparagine 664. Asparagine 854, asparagine 877, and asparagine 1048 each carry an N-linked (GlcNAc...) asparagine glycan. NHL repeat units follow at residues 1166–1192 (LLAP…RRIF), 1194–1238 (SGNV…PKAL), 1264–1308 (ARCG…NGII), 1325–1365 (CDNS…ITEN), and 1452–1495 (CYQT…IRHN). A glycan (N-linked (GlcNAc...) asparagine) is linked at asparagine 1196. The YD 1 repeat unit spans residues 1505 to 1524 (FEVASPASQELYVFDSNGTH). Asparagine 1521 and asparagine 1538 each carry an N-linked (GlcNAc...) asparagine glycan. YD repeat units follow at residues 1541-1561 (YSNE…LRVR), 1604-1623 (YHGN…WTTF), and 1624-1646 (YDYD…TSLI). 4 N-linked (GlcNAc...) asparagine glycosylation sites follow: asparagine 1634, asparagine 1671, asparagine 1729, and asparagine 1814. 18 YD repeats span residues 1817 to 1836 (YSST…ERVE), 1858 to 1876 (YLDK…YIFD), 1877 to 1897 (YDLQ…HTMQ), 1904 to 1921 (YYRN…VTVD), 1922 to 1943 (YSED…VLYK), 1944 to 1961 (YRRQ…TRVS), 1964 to 1984 (YDET…FICS), 1987 to 2007 (YRQI…DGMV), 2015 to 2034 (YDNS…TPLP), 2040 to 2057 (FDDI…GVIY), 2058 to 2084 (YDIN…IKEI), 2086 to 2099 (YEIF…ITIQ), 2100 to 2123 (YDNM…TKYG), 2126 to 2146 (YDVD…WRYN), 2147 to 2167 (YDLN…LTPL), 2169 to 2189 (YDLR…DEDG), 2201 to 2221 (YNSK…TIQY), and 2223 to 2243 (YDGL…LQFF). Asparagine 1915 carries an N-linked (GlcNAc...) asparagine glycan. An N-linked (GlcNAc...) asparagine glycan is attached at asparagine 2118. Asparagine 2258 carries an N-linked (GlcNAc...) asparagine glycan. The stretch at 2269–2310 (YDLQGHLFAMEISSGEEFYIACDNTGTPLAVFSSNGLLLKQV) is one YD 23 repeat. Asparagine 2571 carries an N-linked (GlcNAc...) asparagine glycan.

The protein belongs to the tenascin family. Teneurin subfamily. In terms of assembly, homodimer; disulfide-linked; to mediate homophilic cell adhesion. In terms of tissue distribution, expressed by retinal ganglion cells and their presynaptic amacrine and postsynaptic tectal cell targets.

The protein localises to the cell membrane. The protein resides in the cell projection. It is found in the axon. Functionally, involved in neural development by regulating the establishment of proper connectivity within the nervous system. Acts in both pre- and postsynaptic neurons in the hippocampus to control the assembly of a precise topographic projection: required in both CA1 and subicular neurons for the precise targeting of proximal CA1 axons to distal subiculum, probably by promoting homophilic cell adhesion. Required by retinal ganglion cells for acquisition of their correct morphological and functional connectivity, thereby playing a key role in the development of the visual pathway. The sequence is that of Teneurin-3 (tenm3) from Danio rerio (Zebrafish).